A 765-amino-acid chain; its full sequence is Polyadenylate-binding protein, cytoplasmic and nuclear (765 aa).

Over residues 1 to 37 (MSADASTTPAADSNVTSTPETSTTPAAPAPEVTAVES) the composition is skewed to low complexity. The interval 1-49 (MSADASTTPAADSNVTSTPETSTTPAAPAPEVTAVESTTAPNASQPHSA) is disordered. The span at 38-48 (TTAPNASQPHS) shows a compositional bias: polar residues. RRM domains are found at residues 49 to 127 (ASLY…WSQR), 137 to 214 (GNVF…HHIS), 230 to 307 (TNVY…RAQK), and 333 to 470 (VNLY…LAQR). Disordered stretches follow at residues 364-427 (VMRD…ADKK) and 619-657 (PGYG…PEEA). The segment covering 377-427 (ESDKEKENKEATKENEKESSEAEKAEKTEEKPADSGDEKKEDKESKKADKK) has biased composition (basic and acidic residues). A compositionally biased stretch (low complexity) spans 628–637 (VPVQQGQMRP). The PABC domain maps to 659-736 (AGGLTAQALS…ALNVYDEYMK (78 aa)). Positions 737-765 (NKGGESEATGEAAKPKEAAKETSTEENKS) are disordered. The segment covering 749 to 765 (AKPKEAAKETSTEENKS) has biased composition (basic and acidic residues).

Belongs to the polyadenylate-binding protein type-1 family.

The protein resides in the cytoplasm. The protein localises to the nucleus. Its function is as follows. Binds the poly(A) tail of mRNA. Appears to be an important mediator of the multiple roles of the poly(A) tail in mRNA biogenesis, stability and translation. In the nucleus, involved in both mRNA cleavage and polyadenylation. Is also required for efficient mRNA export to the cytoplasm. Acts in concert with a poly(A)-specific nuclease (PAN) to affect poly(A) tail shortening, which may occur concomitantly with either nucleocytoplasmic mRNA transport or translational initiation. In the cytoplasm, stimulates translation initiation and regulates mRNA decay through translation termination-coupled poly(A) shortening, probably mediated by PAN. The polypeptide is Polyadenylate-binding protein, cytoplasmic and nuclear (pab1) (Aspergillus oryzae (strain ATCC 42149 / RIB 40) (Yellow koji mold)).